We begin with the raw amino-acid sequence, 736 residues long: Factor of DNA methylation 4 (736 aa).

2 stretches are compositionally biased toward basic and acidic residues: residues 80-90 and 144-167; these read RKYLRPRERPR and DSGR…SNED. The tract at residues 80-167 is disordered; it reads RKYLRPRERP…KPDPFFSNED (88 aa). A coiled-coil region spans residues 360-597; the sequence is TLVSNLENTL…RSMRELTTRA (238 aa).

Its function is as follows. Acts in association with FDM3 and FDM5 for RNA-directed DNA methylation (RdDM). This chain is Factor of DNA methylation 4, found in Arabidopsis thaliana (Mouse-ear cress).